A 249-amino-acid chain; its full sequence is NADH-quinone oxidoreductase subunit C (249 aa).

Belongs to the complex I 30 kDa subunit family. In terms of assembly, NDH-1 is composed of 14 different subunits. Subunits NuoB, C, D, E, F, and G constitute the peripheral sector of the complex.

It localises to the cell inner membrane. The catalysed reaction is a quinone + NADH + 5 H(+)(in) = a quinol + NAD(+) + 4 H(+)(out). In terms of biological role, NDH-1 shuttles electrons from NADH, via FMN and iron-sulfur (Fe-S) centers, to quinones in the respiratory chain. The immediate electron acceptor for the enzyme in this species is believed to be ubiquinone. Couples the redox reaction to proton translocation (for every two electrons transferred, four hydrogen ions are translocated across the cytoplasmic membrane), and thus conserves the redox energy in a proton gradient. The sequence is that of NADH-quinone oxidoreductase subunit C from Xylella fastidiosa (strain M12).